Reading from the N-terminus, the 244-residue chain is Probable transcriptional regulatory protein CBU_1566 (244 aa).

This sequence belongs to the TACO1 family.

It localises to the cytoplasm. This is Probable transcriptional regulatory protein CBU_1566 from Coxiella burnetii (strain RSA 493 / Nine Mile phase I).